The following is a 174-amino-acid chain: UPF0316 protein lin1888 (174 aa).

The next 3 membrane-spanning stretches (helical) occupy residues 4 to 24 (GIFIVATIFVVNILYVTIYTV), 36 to 56 (LAALSSVFEMIIYVVALSLVL), and 62 to 82 (IANVLAYAVGFGVGIIVGMKI).

This sequence belongs to the UPF0316 family.

The protein localises to the cell membrane. This is UPF0316 protein lin1888 from Listeria innocua serovar 6a (strain ATCC BAA-680 / CLIP 11262).